A 75-amino-acid chain; its full sequence is Small ribosomal subunit protein bS21B (75 aa).

The span at 33 to 52 (RRSYEKPSERRAREKAEAVR) shows a compositional bias: basic and acidic residues. Residues 33–75 (RRSYEKPSERRAREKAEAVRRARKLARKQAQREGLLPGKKRAA) form a disordered region.

This sequence belongs to the bacterial ribosomal protein bS21 family.

The polypeptide is Small ribosomal subunit protein bS21B (Chelativorans sp. (strain BNC1)).